The sequence spans 469 residues: 6-phospho-beta-galactosidase (469 aa).

D-galactose 6-phosphate-binding residues include glutamine 18, histidine 115, asparagine 158, glutamate 159, and asparagine 296. The active-site Proton donor is the glutamate 159. Glutamate 374 serves as the catalytic Nucleophile. D-galactose 6-phosphate contacts are provided by serine 429, tryptophan 430, lysine 436, and tyrosine 438.

Belongs to the glycosyl hydrolase 1 family.

It carries out the reaction a 6-phospho-beta-D-galactoside + H2O = D-galactose 6-phosphate + an alcohol. It functions in the pathway carbohydrate metabolism; lactose degradation; D-galactose 6-phosphate and beta-D-glucose from lactose 6-phosphate: step 1/1. The polypeptide is 6-phospho-beta-galactosidase (Staphylococcus haemolyticus (strain JCSC1435)).